Consider the following 203-residue polypeptide: Endo-type membrane-bound lytic murein transglycosylase A (203 aa).

The N-terminal stretch at 1-15 is a signal peptide; the sequence is MKLRWFAFLVVLLAG. C16 carries N-palmitoyl cysteine lipidation. C16 is lipidated: S-diacylglycerol cysteine.

It belongs to the transglycosylase Slt family.

Its subcellular location is the cell outer membrane. The enzyme catalyses Endolytic cleavage of the (1-&gt;4)-beta-glycosidic linkage between N-acetylmuramic acid (MurNAc) and N-acetylglucosamine (GlcNAc) residues in peptidoglycan with concomitant formation of a 1,6-anhydrobond in the MurNAc residue.. Its function is as follows. Murein-degrading enzyme. May play a role in recycling of muropeptides during cell elongation and/or cell division. Preferentially cleaves at a distance of more than two disaccharide units from the ends of the glycan chain. The polypeptide is Endo-type membrane-bound lytic murein transglycosylase A (Escherichia fergusonii (strain ATCC 35469 / DSM 13698 / CCUG 18766 / IAM 14443 / JCM 21226 / LMG 7866 / NBRC 102419 / NCTC 12128 / CDC 0568-73)).